Reading from the N-terminus, the 256-residue chain is Triosephosphate isomerase (256 aa).

9–11 (NWK) serves as a coordination point for substrate. The active-site Electrophile is His97. Glu169 acts as the Proton acceptor in catalysis. Substrate-binding positions include Gly175, Ser214, and 235-236 (GG).

The protein belongs to the triosephosphate isomerase family. Homodimer.

It is found in the cytoplasm. The catalysed reaction is D-glyceraldehyde 3-phosphate = dihydroxyacetone phosphate. Its pathway is carbohydrate biosynthesis; gluconeogenesis. It functions in the pathway carbohydrate degradation; glycolysis; D-glyceraldehyde 3-phosphate from glycerone phosphate: step 1/1. In terms of biological role, involved in the gluconeogenesis. Catalyzes stereospecifically the conversion of dihydroxyacetone phosphate (DHAP) to D-glyceraldehyde-3-phosphate (G3P). The chain is Triosephosphate isomerase from Moritella marina (Vibrio marinus).